Consider the following 491-residue polypeptide: Cyclin-A1-3 (491 aa).

A compositionally biased stretch (low complexity) spans 1-21 (MSSSLASRRSSSSSAAKRPAA). 2 disordered regions span residues 1-32 (MSSS…AAGA) and 69-106 (SLAS…QKES). Residues 75–91 (NVGTNRVSAVKSASTKP) are compositionally biased toward polar residues.

The protein belongs to the cyclin family. Cyclin AB subfamily.

In Oryza sativa subsp. japonica (Rice), this protein is Cyclin-A1-3 (CYCA1-3).